Reading from the N-terminus, the 86-residue chain is Large ribosomal subunit protein bL27 (86 aa).

The tract at residues 1 to 22 is disordered; that stretch reads MAHKKAGGSSRNGRDSESKRLG.

The protein belongs to the bacterial ribosomal protein bL27 family.

This Acidithiobacillus ferrooxidans (strain ATCC 23270 / DSM 14882 / CIP 104768 / NCIMB 8455) (Ferrobacillus ferrooxidans (strain ATCC 23270)) protein is Large ribosomal subunit protein bL27.